A 384-amino-acid chain; its full sequence is Deoxyguanosinetriphosphate triphosphohydrolase-like protein (384 aa).

The interval 13–42 (LASYASDPSKTRGRRHSEPPPENRTEFQRD) is disordered. A compositionally biased stretch (basic and acidic residues) spans 28 to 42 (HSEPPPENRTEFQRD). The HD domain occupies 73-208 (RLTHSLEVAQ…ANLADEVAYN (136 aa)).

The protein belongs to the dGTPase family. Type 2 subfamily.

This is Deoxyguanosinetriphosphate triphosphohydrolase-like protein from Bordetella bronchiseptica (strain ATCC BAA-588 / NCTC 13252 / RB50) (Alcaligenes bronchisepticus).